A 551-amino-acid chain; its full sequence is Gliomedin (551 aa).

At 1-17 the chain is on the cytoplasmic side; it reads MARGAEGGRGDAGWGLR. The helical; Signal-anchor for type II membrane protein transmembrane segment at 18-39 threads the bilayer; that stretch reads GALAAVALLSALNAAGTVFALC. At 40–551 the chain is on the extracellular side; it reads QWRGLSSALR…VQFLSTTLNQ (512 aa). The disordered stretch occupies residues 72 to 107; that stretch reads LSRAPRGASAPPQDPASSARNKRSHSGEPAPHIRAE. Low complexity predominate over residues 79–90; that stretch reads ASAPPQDPASSA. The N-linked (GlcNAc...) asparagine glycan is linked to asparagine 130. Collagen-like domains follow at residues 137–195 and 196–222; these read LTGP…RGEK and GDHG…KGDV. Residues 139–282 are disordered; that stretch reads GPSGPPGPPG…GETCAIPNDD (144 aa). Composition is skewed to basic and acidic residues over residues 191–200 and 213–222; these read ERGEKGDHGE and KGEKGDKGDV. The segment covering 237-253 has biased composition (pro residues); it reads PPGPPGPPGPPGPPGPP. The 248-residue stretch at 299–546 folds into the Olfactomedin-like domain; sequence QAESMITSIG…LMLYPVQFLS (248 aa). N-linked (GlcNAc...) asparagine glycosylation is found at asparagine 329, asparagine 357, asparagine 378, and asparagine 464.

Homotrimer (via collagen-like domains). Interacts with NRCAM and NFASC/neurofascin. Interaction with glial NRCAM enhances interaction with axonal NFASC. Interacts with MYOC. In terms of processing, N-glycosylated. Post-translationally, proteolytic processing by a furin-like protease causes shedding of the ectodomain. Further cleavage by BMP1 releases the olfactomedin-like domain. Specifically expressed in spinal cord, brain, placenta and sciatic nerve. More abundant in peripheral than central nervous system.

Its subcellular location is the cell membrane. It localises to the cell projection. The protein resides in the axon. The protein localises to the secreted. It is found in the extracellular space. Its subcellular location is the extracellular matrix. Functionally, ligand for NRCAM and NFASC/neurofascin that plays a role in the formation and maintenance of the nodes of Ranvier on myelinated axons. Mediates interaction between Schwann cell microvilli and axons via its interactions with NRCAM and NFASC. Nodes of Ranvier contain clustered sodium channels that are crucial for the saltatory propagation of action potentials along myelinated axons. During development, nodes of Ranvier are formed by the fusion of two heminodes. Required for normal clustering of sodium channels at heminodes; not required for the formation of mature nodes with normal sodium channel clusters. Required, together with NRCAM, for maintaining NFASC and sodium channel clusters at mature nodes of Ranvier. The polypeptide is Gliomedin (GLDN) (Homo sapiens (Human)).